Consider the following 493-residue polypeptide: Glycerol kinase (493 aa).

T13 lines the ADP pocket. Residues T13, T14, and S15 each contribute to the ATP site. T13 is a binding site for sn-glycerol 3-phosphate. R17 provides a ligand contact to ADP. 4 residues coordinate sn-glycerol 3-phosphate: R83, E84, Y135, and D244. 5 residues coordinate glycerol: R83, E84, Y135, D244, and Q245. Residues T266 and G309 each contribute to the ADP site. ATP is bound by residues T266, G309, Q313, and G410. ADP contacts are provided by G410 and N414.

Belongs to the FGGY kinase family.

It catalyses the reaction glycerol + ATP = sn-glycerol 3-phosphate + ADP + H(+). It functions in the pathway polyol metabolism; glycerol degradation via glycerol kinase pathway; sn-glycerol 3-phosphate from glycerol: step 1/1. Inhibited by fructose 1,6-bisphosphate (FBP). Its function is as follows. Key enzyme in the regulation of glycerol uptake and metabolism. Catalyzes the phosphorylation of glycerol to yield sn-glycerol 3-phosphate. The chain is Glycerol kinase from Shewanella piezotolerans (strain WP3 / JCM 13877).